A 180-amino-acid chain; its full sequence is Putative adenylate kinase (180 aa).

ATP is bound by residues glycine 10, glycine 12, lysine 13, threonine 14, and threonine 15. Residues 30–50 form an NMP region; it reads NLRDFALEKGCGREVDGEVEV. The interval 99 to 109 is LID; it reads ERGYSKEKIGE. Residues arginine 100 and lysine 138 each coordinate ATP.

This sequence belongs to the adenylate kinase family. AK6 subfamily. As to quaternary structure, interacts with uS11. Not a structural component of 40S pre-ribosomes, but transiently interacts with them by binding to uS11.

It carries out the reaction AMP + ATP = 2 ADP. It catalyses the reaction ATP + H2O = ADP + phosphate + H(+). Its function is as follows. Broad-specificity nucleoside monophosphate (NMP) kinase that catalyzes the reversible transfer of the terminal phosphate group between nucleoside triphosphates and monophosphates. Also has ATPase activity. Involved in the late maturation steps of the 30S ribosomal particles, specifically 16S rRNA maturation. While NMP activity is not required for ribosome maturation, ATPase activity is. Associates transiently with small ribosomal subunit protein uS11. ATP hydrolysis breaks the interaction with uS11. May temporarily remove uS11 from the ribosome to enable a conformational change of the ribosomal RNA that is needed for the final maturation step of the small ribosomal subunit. The polypeptide is Putative adenylate kinase (Pyrococcus abyssi (strain GE5 / Orsay)).